Reading from the N-terminus, the 42-residue chain is Ostricacin-4 (42 aa).

Disulfide bonds link Cys-8–Cys-36, Cys-15–Cys-30, and Cys-20–Cys-37.

Its subcellular location is the secreted. Functionally, has antibacterial activity against the Gram-positive bacterium S.aureus 1056 MRSA (MIC=11.48 ug/ml) and the Gram-negative bacterium E.coli O157:H7 (MIC=12.03 ug/ml). Does not have antifungal activity against the yeast C.albicans 3153A. This is Ostricacin-4 from Struthio camelus (Common ostrich).